A 367-amino-acid polypeptide reads, in one-letter code: Phosphoribosylaminoimidazole-succinocarboxamide synthase (367 aa).

The protein belongs to the SAICAR synthetase family.

It carries out the reaction 5-amino-1-(5-phospho-D-ribosyl)imidazole-4-carboxylate + L-aspartate + ATP = (2S)-2-[5-amino-1-(5-phospho-beta-D-ribosyl)imidazole-4-carboxamido]succinate + ADP + phosphate + 2 H(+). It participates in purine metabolism; IMP biosynthesis via de novo pathway; 5-amino-1-(5-phospho-D-ribosyl)imidazole-4-carboxamide from 5-amino-1-(5-phospho-D-ribosyl)imidazole-4-carboxylate: step 1/2. The chain is Phosphoribosylaminoimidazole-succinocarboxamide synthase from Psychromonas ingrahamii (strain DSM 17664 / CCUG 51855 / 37).